A 203-amino-acid polypeptide reads, in one-letter code: bMERB domain-containing protein 1 (203 aa).

The region spanning Leu3–Asp149 is the bMERB domain. The tract at residues Lys160–Thr186 is disordered.

This is bMERB domain-containing protein 1 (Bmerb1) from Rattus norvegicus (Rat).